The primary structure comprises 576 residues: Arginine--tRNA ligase (576 aa).

The 'HIGH' region signature appears at 122-132 (PNVAKQMHVGH).

Belongs to the class-I aminoacyl-tRNA synthetase family. In terms of assembly, monomer.

It localises to the cytoplasm. It catalyses the reaction tRNA(Arg) + L-arginine + ATP = L-arginyl-tRNA(Arg) + AMP + diphosphate. The chain is Arginine--tRNA ligase from Yersinia pseudotuberculosis serotype I (strain IP32953).